Reading from the N-terminus, the 289-residue chain is tRNA pseudouridine synthase B (289 aa).

Aspartate 55 (nucleophile) is an active-site residue. Residues proline 243 to arginine 289 are disordered. Basic and acidic residues predominate over residues alanine 265 to arginine 289.

The protein belongs to the pseudouridine synthase TruB family. Type 1 subfamily.

It carries out the reaction uridine(55) in tRNA = pseudouridine(55) in tRNA. In terms of biological role, responsible for synthesis of pseudouridine from uracil-55 in the psi GC loop of transfer RNAs. The protein is tRNA pseudouridine synthase B of Chlorobium luteolum (strain DSM 273 / BCRC 81028 / 2530) (Pelodictyon luteolum).